The primary structure comprises 121 residues: Small ribosomal subunit protein bS6 (121 aa).

Residues 94–121 are disordered; that stretch reads KAETGPSAVMKRVEKEEARKSSQQETAA. The span at 104–115 shows a compositional bias: basic and acidic residues; that stretch reads KRVEKEEARKSS.

The protein belongs to the bacterial ribosomal protein bS6 family.

Binds together with bS18 to 16S ribosomal RNA. This is Small ribosomal subunit protein bS6 from Leptothrix cholodnii (strain ATCC 51168 / LMG 8142 / SP-6) (Leptothrix discophora (strain SP-6)).